Consider the following 91-residue polypeptide: Putative defensin-like protein 221 (91 aa).

A signal peptide spans 1–19; that stretch reads MKTLFFFLTIAVLVSSCTS. 3 cysteine pairs are disulfide-bonded: C61–C78, C64–C83, and C68–C85.

Belongs to the DEFL family.

It is found in the secreted. This chain is Putative defensin-like protein 221, found in Arabidopsis thaliana (Mouse-ear cress).